Consider the following 257-residue polypeptide: Transmembrane protein 101 (257 aa).

8 helical membrane-spanning segments follow: residues 24–40, 52–72, 77–97, 110–130, 139–159, 182–202, 206–226, and 233–253; these read TRCPFWGCFSQLMLYAE, VPYLYFDMGAAVLCASFMSFG, WFALGAALQLAISTYTAYIGG, YSRTVAIIGGFLVLASGAGEL, SLQSTGQVFLGIYLICVAYSL, LFFVLYGVLALAFLSGYYVTL, ILAVLLPPVMLLIDGNVSYWH, and FWNQMKLLGESVGIFGAAVIL.

The protein localises to the membrane. Functionally, may activate NF-kappa-B signaling pathways. The sequence is that of Transmembrane protein 101 (Tmem101) from Mus musculus (Mouse).